The following is a 545-amino-acid chain: MAELSISPDEIRDALKDFVQSYEPGKASTTEVGYVLDAGDGIAHVQGLPGVMANELITFADGTLGLAQNLEESEIGVIVLGEFAGIEEGMEVRRTGEVLSVPVGDGYLGRVVDPLGNPIDGQGEIATEGRRALELQAPGVMQRKSVHEPMQTGIKAIDAMIPIGRGQRQLIIGDRQTGKTAIAIDTIINQKANWESGDTNKQVRCIYVAIGQKGSTIASVKGALEEAGAMEYTTIVASPASDPAGFKYLAPYTGSAIGQHWMYGGKHVLIIFDDLSKQAEAYRAVSLLLRRPPGREAYPGDVFYLHSRLLERCAKLSDELGAGSMTGLPIIETKANDVSAYIPTNVISITDGQIFLQSDLFNANQRPAVDVGISVSRVGGDAQVKSIKKVSGTLKLELAQYRSLEAFAIFASDLDAASRRQLARGARLTELLKQPQYSPFPIEEQVVSIWAGTKGKLDEVPVEDILRFERELLDHLHRNTEVLSQLKEKNVLTDDIVDAMDKAVDQFKLEFQTGEGKPLASVGSEKFEPAKAEDVNQEQIVKGKR.

173 to 180 (GDRQTGKT) contributes to the ATP binding site.

Belongs to the ATPase alpha/beta chains family. F-type ATPases have 2 components, CF(1) - the catalytic core - and CF(0) - the membrane proton channel. CF(1) has five subunits: alpha(3), beta(3), gamma(1), delta(1), epsilon(1). CF(0) has three main subunits: a(1), b(2) and c(9-12). The alpha and beta chains form an alternating ring which encloses part of the gamma chain. CF(1) is attached to CF(0) by a central stalk formed by the gamma and epsilon chains, while a peripheral stalk is formed by the delta and b chains.

Its subcellular location is the cell membrane. It carries out the reaction ATP + H2O + 4 H(+)(in) = ADP + phosphate + 5 H(+)(out). Its function is as follows. Produces ATP from ADP in the presence of a proton gradient across the membrane. The alpha chain is a regulatory subunit. This chain is ATP synthase subunit alpha, found in Clavibacter michiganensis subsp. michiganensis (strain NCPPB 382).